An 838-amino-acid polypeptide reads, in one-letter code: Pentatricopeptide repeat-containing protein At4g19440, chloroplastic (838 aa).

The transit peptide at 1–32 (MAALLYFPKISSQMTSSHFISFSPMDLRRLSR) directs the protein to the chloroplast. PPR repeat units lie at residues 238–268 (SKTT…VCKG), 272–306 (DVYL…GVAP), 307–341 (NVVT…GMEP), 342–376 (TLIT…GFPP), 377–411 (NVIV…GLSL), 412–446 (TSST…GFNV), 447–481 (NQGS…NMSP), 482–516 (GGGL…GFVV), 517–551 (DTRT…GCVM), 552–586 (DRVS…GLKP), 587–621 (DNYT…GMLP), 622–656 (DVYT…NVQP), 657–691 (NTVV…GISP), 692–726 (NSAT…GLEP), 727–761 (NVFH…NVHP), and 762–796 (NKIT…GIVP).

This sequence belongs to the PPR family. P subfamily.

It is found in the plastid. The protein localises to the chloroplast. The polypeptide is Pentatricopeptide repeat-containing protein At4g19440, chloroplastic (Arabidopsis thaliana (Mouse-ear cress)).